The primary structure comprises 374 residues: Carboxypeptidase O (374 aa).

The N-terminal stretch at 1–20 (MKPLLETLYLLGMLVPGGLG) is a signal peptide. The region spanning 49 to 344 (IYHPMGEIYE…EAVLSVLDDV (296 aa)) is the Peptidase M14 domain. His-108 and Glu-111 together coordinate Zn(2+). Residues Asn-132, Asn-174, and Asn-187 are each glycosylated (N-linked (GlcNAc...) asparagine). A Zn(2+)-binding site is contributed by His-236. Residue Asn-251 is glycosylated (N-linked (GlcNAc...) asparagine). Glu-310 acts as the Proton donor/acceptor in catalysis. A lipid anchor (GPI-anchor amidated aspartate) is attached at Asp-352. Positions 353–374 (SAGRVTSATMLLGLLVSCMSLL) are cleaved as a propeptide — removed in mature form.

The protein belongs to the peptidase M14 family. It depends on Zn(2+) as a cofactor. Post-translationally, N-glycosylated. Detected in enterocytes of the ileum.

The protein localises to the apical cell membrane. Strongly inhibited by potato carboxypeptidase inhibitor, and the chelating agents EDTA and 1,10-phenanthroline. Also inhibited by compounds with multiple carboxylic acid groups such as citrate and succinate, and to a lesser exent the amino acids aspartate and glutamate. Not significantly inhibited by benzylsuccinic acid. Carboxypeptidase which preferentially cleaves C-terminal acidic residues from peptides and proteins. Can also cleave C-terminal hydrophobic amino acids, with a preference for small residues over large residues. This is Carboxypeptidase O from Homo sapiens (Human).